A 443-amino-acid polypeptide reads, in one-letter code: Ribulose bisphosphate carboxylase large chain (443 aa).

Substrate is bound by residues Asn-89 and Thr-139. Lys-141 acts as the Proton acceptor in catalysis. Lys-143 serves as a coordination point for substrate. Lys-167, Asp-169, and Glu-170 together coordinate Mg(2+). Position 167 is an N6-carboxylysine (Lys-167). His-260 acts as the Proton acceptor in catalysis. The substrate site is built by Arg-261, His-293, and Ser-345.

Belongs to the RuBisCO large chain family. Type I subfamily. As to quaternary structure, heterohexadecamer of 8 large chains and 8 small chains; disulfide-linked. The disulfide link is formed within the large subunit homodimers. The cofactor is Mg(2+). The disulfide bond which can form in the large chain dimeric partners within the hexadecamer appears to be associated with oxidative stress and protein turnover.

It localises to the plastid. The protein resides in the chloroplast. It catalyses the reaction 2 (2R)-3-phosphoglycerate + 2 H(+) = D-ribulose 1,5-bisphosphate + CO2 + H2O. The catalysed reaction is D-ribulose 1,5-bisphosphate + O2 = 2-phosphoglycolate + (2R)-3-phosphoglycerate + 2 H(+). RuBisCO catalyzes two reactions: the carboxylation of D-ribulose 1,5-bisphosphate, the primary event in carbon dioxide fixation, as well as the oxidative fragmentation of the pentose substrate in the photorespiration process. Both reactions occur simultaneously and in competition at the same active site. This chain is Ribulose bisphosphate carboxylase large chain, found in Verbena bonariensis (Argentinian vervain).